Here is an 88-residue protein sequence, read N- to C-terminus: Translation initiation factor IF-1 2 (88 aa).

The S1-like domain occupies 1–72 (MAKEELIELQ…TKGRINFRHK (72 aa)).

Belongs to the IF-1 family. As to quaternary structure, component of the 30S ribosomal translation pre-initiation complex which assembles on the 30S ribosome in the order IF-2 and IF-3, IF-1 and N-formylmethionyl-tRNA(fMet); mRNA recruitment can occur at any time during PIC assembly.

Its subcellular location is the cytoplasm. Functionally, one of the essential components for the initiation of protein synthesis. Stabilizes the binding of IF-2 and IF-3 on the 30S subunit to which N-formylmethionyl-tRNA(fMet) subsequently binds. Helps modulate mRNA selection, yielding the 30S pre-initiation complex (PIC). Upon addition of the 50S ribosomal subunit IF-1, IF-2 and IF-3 are released leaving the mature 70S translation initiation complex. In Bordetella avium (strain 197N), this protein is Translation initiation factor IF-1 2.